Reading from the N-terminus, the 813-residue chain is MYDSKKLELKWQEIWDKEGIFEPKKDYNLQKKYILSMFPYPSGRIHMGHVRNYTIGDAISRYYRMQGYNVLQPIGFDSFGMPAENAAIKHKIHPKKWTYDNIDYMTKELFRLGFSFSKNRILATSDPIYTKFEQEFFIKMFEKGLIYRKNAVVNWCEQDQTVLANEQVEDGKCWRCGNEVVQKEMPGYYLKITSYADELLSCLKDLQNHWPSQVITMQENWIGKSFGLEFDFKFDDESSKKLGGVKSFKVFTTRPDTIYGMSYAALAPEHAVVKAVLEKNLVSKETADKIKKILNQSPRERQANDKDGAFLNLFAIHPLSGKKIPVWMANFVLAEYGGGAVMAVPAHDERDFEFAHKFNLPIIQSIGAKNGENVKLPYIESGILVDSAEFSGLENEDAKMKIIEKFEKEKIGKRVTNYKLRDWGISRQRYWGAPIPMIKCPKCGLVPEKIKNLPVTLPDDIKITGKGNPLDKHPTWKHCTCPKCGAEAERETDTLDTFFDSSWYFARFTSDENMWQEKGIDEKSANYWMNVDQYIGGIEHAILHLLYARFFQKVLRDLGYLRDSEPFANLLTQGMVLKDGAKMSKSKGNVVDPDEIIEKYGADTARLFILFAAPPQKELEWNDSAVEGAYKFLNRLYERSQNVQKTREIPKIDQSSLNKAEKYARLKVYEALQKSSEVYEKTFAFNTLIAACMEALNALNAQENRQILTEGYFIILNLLDPIVPHIACELSENLFGRANFTPIKILPEVFEKDEIRLAVTVNGKKRAEIEVASDLSQSEILKIAKEQVLKWLENKKIIKEIYIKNKLVNLVVK.

A 'HIGH' region motif is present at residues 39–49; that stretch reads PYPSGRIHMGH. A 'KMSKS' region motif is present at residues 582-586; the sequence is KMSKS. Lys585 is an ATP binding site.

Belongs to the class-I aminoacyl-tRNA synthetase family.

Its subcellular location is the cytoplasm. The catalysed reaction is tRNA(Leu) + L-leucine + ATP = L-leucyl-tRNA(Leu) + AMP + diphosphate. The chain is Leucine--tRNA ligase from Campylobacter hominis (strain ATCC BAA-381 / DSM 21671 / CCUG 45161 / LMG 19568 / NCTC 13146 / CH001A).